Here is a 518-residue protein sequence, read N- to C-terminus: Light-independent protochlorophyllide reductase subunit B (518 aa).

D36 contacts [4Fe-4S] cluster. The active-site Proton donor is D285. 420–421 contacts substrate; the sequence is GL.

This sequence belongs to the ChlB/BchB/BchZ family. Protochlorophyllide reductase is composed of three subunits; BchL, BchN and BchB. Forms a heterotetramer of two BchB and two BchN subunits. [4Fe-4S] cluster is required as a cofactor.

It catalyses the reaction chlorophyllide a + oxidized 2[4Fe-4S]-[ferredoxin] + 2 ADP + 2 phosphate = protochlorophyllide a + reduced 2[4Fe-4S]-[ferredoxin] + 2 ATP + 2 H2O. The protein operates within porphyrin-containing compound metabolism; bacteriochlorophyll biosynthesis (light-independent). Functionally, component of the dark-operative protochlorophyllide reductase (DPOR) that uses Mg-ATP and reduced ferredoxin to reduce ring D of protochlorophyllide (Pchlide) to form chlorophyllide a (Chlide). This reaction is light-independent. The NB-protein (BchN-BchB) is the catalytic component of the complex. The sequence is that of Light-independent protochlorophyllide reductase subunit B from Bradyrhizobium sp. (strain ORS 278).